A 149-amino-acid chain; its full sequence is Small ribosomal subunit protein uS13 (149 aa).

Residues 118–149 (GRRHELGLPVRGQRTKSTFRKGSSVGVRRKKR) are disordered.

This sequence belongs to the universal ribosomal protein uS13 family. As to quaternary structure, part of the 30S ribosomal subunit. Forms a loose heterodimer with protein S19. Forms two bridges to the 50S subunit in the 70S ribosome.

Its function is as follows. Located at the top of the head of the 30S subunit, it contacts several helices of the 16S rRNA. In the 70S ribosome it contacts the 23S rRNA (bridge B1a) and protein L5 of the 50S subunit (bridge B1b), connecting the 2 subunits; these bridges are implicated in subunit movement. The protein is Small ribosomal subunit protein uS13 of Methanothermobacter thermautotrophicus (strain ATCC 29096 / DSM 1053 / JCM 10044 / NBRC 100330 / Delta H) (Methanobacterium thermoautotrophicum).